The primary structure comprises 201 residues: uncharacterized protein (201 aa).

A Bro-N domain is found at 15-122; sequence KNQIQFSTFN…EVLPQIRKTG (108 aa).

This is an uncharacterized protein from Haemophilus influenzae (strain ATCC 51907 / DSM 11121 / KW20 / Rd).